A 206-amino-acid polypeptide reads, in one-letter code: Large ribosomal subunit protein eL13x (206 aa).

Positions 186–206 are disordered; sequence NARHAGARAKRAAEAEKEEKK. Over residues 196–206 the composition is skewed to basic and acidic residues; the sequence is RAAEAEKEEKK.

The protein belongs to the eukaryotic ribosomal protein eL13 family.

This is Large ribosomal subunit protein eL13x (RPL13D) from Arabidopsis thaliana (Mouse-ear cress).